The sequence spans 317 residues: Annexin A13 (317 aa).

G2 is lipidated: N-myristoyl glycine. Annexin repeat units lie at residues 15–86, 87–158, 170–242, and 246–317; these read FDAD…ALLD, RPNE…SLLQ, ELAG…TIVR, and DLEG…ALLH.

The protein belongs to the annexin family. Monomer and homodimer. In terms of tissue distribution, detected on the tips of microvilli in small intestine (at protein level).

The protein localises to the apical cell membrane. Its subcellular location is the cell membrane. The protein resides in the cytoplasmic vesicle. Functionally, binds to membranes enriched in phosphatidylserine or phosphatidylglycerol in a calcium-dependent manner. Half-maximal membrane binding requires about 60 uM calcium. Does not bind to membranes that lack phospholipids with an acidic headgroup. This chain is Annexin A13 (Anxa13), found in Mus musculus (Mouse).